We begin with the raw amino-acid sequence, 268 residues long: Small ribosomal subunit protein uS3 (268 aa).

One can recognise a KH type-2 domain in the interval 38–106; it reads IRKLLATGME…QVQLNILEVK (69 aa). The segment at 218-268 is disordered; the sequence is VAAPAGDRPRRERPSRPRRSGATGTTATSTEAGRAATATADAPATTEQKEG. Positions 237-268 are enriched in low complexity; it reads SGATGTTATSTEAGRAATATADAPATTEQKEG.

It belongs to the universal ribosomal protein uS3 family. In terms of assembly, part of the 30S ribosomal subunit. Forms a tight complex with proteins S10 and S14.

Functionally, binds the lower part of the 30S subunit head. Binds mRNA in the 70S ribosome, positioning it for translation. This Rhodococcus jostii (strain RHA1) protein is Small ribosomal subunit protein uS3.